A 162-amino-acid polypeptide reads, in one-letter code: ATP synthase subunit delta, mitochondrial (162 aa).

The transit peptide at 1 to 25 (MSSLRLLASAARRATTHVAYTRRGY) directs the protein to the mitochondrion.

Belongs to the ATPase epsilon chain family. In terms of assembly, F-type ATPases have 2 components, CF(1) - the catalytic core - and CF(0) - the membrane proton channel. CF(1) has five subunits: alpha(3), beta(3), gamma(1), delta(1), epsilon(1). CF(0) has three main subunits: a, b and c.

It is found in the mitochondrion. It localises to the mitochondrion inner membrane. In terms of biological role, mitochondrial membrane ATP synthase (F(1)F(0) ATP synthase or Complex V) produces ATP from ADP in the presence of a proton gradient across the membrane which is generated by electron transport complexes of the respiratory chain. F-type ATPases consist of two structural domains, F(1) - containing the extramembraneous catalytic core, and F(0) - containing the membrane proton channel, linked together by a central stalk and a peripheral stalk. During catalysis, ATP turnover in the catalytic domain of F(1) is coupled via a rotary mechanism of the central stalk subunits to proton translocation. Part of the complex F(1) domain and of the central stalk which is part of the complex rotary element. Rotation of the central stalk against the surrounding alpha(3)beta(3) subunits leads to hydrolysis of ATP in three separate catalytic sites on the beta subunits. This chain is ATP synthase subunit delta, mitochondrial (atpD), found in Agaricus bisporus (White button mushroom).